Here is a 197-residue protein sequence, read N- to C-terminus: Protein SYM1 (197 aa).

The next 4 membrane-spanning stretches (helical) occupy residues 20–40 (AIMT…LFPT), 55–75 (AVIY…KILN), 97–117 (VDQL…MSIM), and 137–157 (LLTN…VVPL).

Belongs to the peroxisomal membrane protein PXMP2/4 family.

The protein localises to the mitochondrion inner membrane. May be involved in cellular response to stress. Required to maintain mitochondrial DNA (mtDNA) integrity and stability. Required for ethanol metabolism and tolerance during heat shock. This chain is Protein SYM1 (SYM1), found in Saccharomyces cerevisiae (strain ATCC 204508 / S288c) (Baker's yeast).